The following is a 673-amino-acid chain: Potassium-transporting ATPase ATP-binding subunit (673 aa).

The next 4 helical transmembrane spans lie at 34 to 54 (IMFVVEVGMLLALGLTIYPDL), 65 to 85 (VFSIFIILLLTLVFANFSEAL), 216 to 236 (IALFTLLMTLTIIFLVVILTM), and 253 to 273 (IALAVCLIPTTIGGLLSAIGI). The active-site 4-aspartylphosphate intermediate is the aspartate 304. ATP is bound by residues aspartate 341, glutamate 345, 370 to 377 (FTAETRMS), and lysine 388. Residues aspartate 511 and aspartate 515 each coordinate Mg(2+). Helical transmembrane passes span 581–601 (FAILPAMFMAAMPAMNHLNIM), 609–629 (AVLSALIFNALIIVLLIPIAM), and 649–669 (VYGLGGMIVPFIGIKLIDLII).

This sequence belongs to the cation transport ATPase (P-type) (TC 3.A.3) family. Type IA subfamily. In terms of assembly, the system is composed of three essential subunits: KdpA, KdpB and KdpC.

It localises to the cell membrane. It carries out the reaction K(+)(out) + ATP + H2O = K(+)(in) + ADP + phosphate + H(+). In terms of biological role, part of the high-affinity ATP-driven potassium transport (or Kdp) system, which catalyzes the hydrolysis of ATP coupled with the electrogenic transport of potassium into the cytoplasm. This subunit is responsible for energy coupling to the transport system and for the release of the potassium ions to the cytoplasm. This chain is Potassium-transporting ATPase ATP-binding subunit, found in Staphylococcus epidermidis (strain ATCC 35984 / DSM 28319 / BCRC 17069 / CCUG 31568 / BM 3577 / RP62A).